The sequence spans 364 residues: UDP-N-acetylglucosamine--N-acetylmuramyl-(pentapeptide) pyrophosphoryl-undecaprenol N-acetylglucosamine transferase (364 aa).

UDP-N-acetyl-alpha-D-glucosamine is bound by residues 10–12 (TGG), asparagine 128, arginine 170, serine 199, isoleucine 250, and glutamine 295.

The protein belongs to the glycosyltransferase 28 family. MurG subfamily.

It is found in the cell inner membrane. It carries out the reaction di-trans,octa-cis-undecaprenyl diphospho-N-acetyl-alpha-D-muramoyl-L-alanyl-D-glutamyl-meso-2,6-diaminopimeloyl-D-alanyl-D-alanine + UDP-N-acetyl-alpha-D-glucosamine = di-trans,octa-cis-undecaprenyl diphospho-[N-acetyl-alpha-D-glucosaminyl-(1-&gt;4)]-N-acetyl-alpha-D-muramoyl-L-alanyl-D-glutamyl-meso-2,6-diaminopimeloyl-D-alanyl-D-alanine + UDP + H(+). It participates in cell wall biogenesis; peptidoglycan biosynthesis. Cell wall formation. Catalyzes the transfer of a GlcNAc subunit on undecaprenyl-pyrophosphoryl-MurNAc-pentapeptide (lipid intermediate I) to form undecaprenyl-pyrophosphoryl-MurNAc-(pentapeptide)GlcNAc (lipid intermediate II). This Chlorobium limicola (strain DSM 245 / NBRC 103803 / 6330) protein is UDP-N-acetylglucosamine--N-acetylmuramyl-(pentapeptide) pyrophosphoryl-undecaprenol N-acetylglucosamine transferase.